We begin with the raw amino-acid sequence, 372 residues long: Cobalt-precorrin-5B C(1)-methyltransferase (372 aa).

Belongs to the CbiD family.

The enzyme catalyses Co-precorrin-5B + S-adenosyl-L-methionine = Co-precorrin-6A + S-adenosyl-L-homocysteine. It functions in the pathway cofactor biosynthesis; adenosylcobalamin biosynthesis; cob(II)yrinate a,c-diamide from sirohydrochlorin (anaerobic route): step 6/10. In terms of biological role, catalyzes the methylation of C-1 in cobalt-precorrin-5B to form cobalt-precorrin-6A. The polypeptide is Cobalt-precorrin-5B C(1)-methyltransferase (Prochlorococcus marinus (strain MIT 9515)).